We begin with the raw amino-acid sequence, 438 residues long: RNA polymerase sigma factor SigA (438 aa).

The segment covering 1 to 11 has biased composition (basic residues); the sequence is MKKSKSKKKAA. The interval 1-69 is disordered; the sequence is MKKSKSKKKA…PLDLEGPLEA (69 aa). Over residues 12–26 the composition is skewed to basic and acidic residues; it reads KAQEVEVKEPVKEPE. Acidic residues-rich tracts occupy residues 27–45 and 52–69; these read PLPE…EPDP and PELE…PLEA. The sigma-70 factor domain-1 stretch occupies residues 93–128; sequence SDPVRQYLHEIGQVPLLTLEEEIDLARKVEEGMEAI. Residues 202–272 form a sigma-70 factor domain-2 region; the sequence is LIEANLRLVV…NRAIADQART (71 aa). Positions 226-229 match the Interaction with polymerase core subunit RpoC motif; sequence DLIQ. The segment at 281–359 is sigma-70 factor domain-3; sequence ETINKLSRTA…DENLPSPVEA (79 aa). The sigma-70 factor domain-4 stretch occupies residues 372 to 424; that stretch reads ALSKLSEREAMVLKLRKGLIDGREHTLEEVGAYFGVTRERIRQIENKALRKLK. Residues 398 to 417 constitute a DNA-binding region (H-T-H motif); sequence LEEVGAYFGVTRERIRQIEN.

Belongs to the sigma-70 factor family. RpoD/SigA subfamily. As to quaternary structure, interacts transiently with the RNA polymerase catalytic core formed by RpoA, RpoB, RpoC and RpoZ (2 alpha, 1 beta, 1 beta' and 1 omega subunit) to form the RNA polymerase holoenzyme that can initiate transcription.

Its subcellular location is the cytoplasm. In terms of biological role, sigma factors are initiation factors that promote the attachment of RNA polymerase to specific initiation sites and are then released. This sigma factor is the primary sigma factor during exponential growth. This Thermus aquaticus protein is RNA polymerase sigma factor SigA.